A 138-amino-acid chain; its full sequence is MPAAFPCVFPPQSLQVFPQMIVKVWEKQSLPLPGLRGSPVERLYLPRNELDNPHKQKAWKIYPPEFAVEILFGMVSVDSLLFVLSSPHWWLHLAQGSFWMSEGGFSLCHPGWSVVAQSLLTSTSAFCVRAILLPQPPE.

The C2 tensin-type domain maps to Met1–Val75.

This chain is Putative phosphatidylinositol 3,4,5-trisphosphate 3-phosphatase TPTE2P1 (TPTE2P1), found in Homo sapiens (Human).